The following is a 120-amino-acid chain: NAD(P)H-quinone oxidoreductase subunit 3 (120 aa).

The next 3 helical transmembrane spans lie at 10–30, 64–84, and 89–109; these read FLGFLLIAAAVPILALVTNLI, MFALVFVIFDVETVFLYPWAV, and LGLLAFIEALIFIAILVIALA.

Belongs to the complex I subunit 3 family. As to quaternary structure, NDH-1 can be composed of about 15 different subunits; different subcomplexes with different compositions have been identified which probably have different functions.

It localises to the cellular thylakoid membrane. It carries out the reaction a plastoquinone + NADH + (n+1) H(+)(in) = a plastoquinol + NAD(+) + n H(+)(out). The catalysed reaction is a plastoquinone + NADPH + (n+1) H(+)(in) = a plastoquinol + NADP(+) + n H(+)(out). Functionally, NDH-1 shuttles electrons from an unknown electron donor, via FMN and iron-sulfur (Fe-S) centers, to quinones in the respiratory and/or the photosynthetic chain. The immediate electron acceptor for the enzyme in this species is believed to be plastoquinone. Couples the redox reaction to proton translocation, and thus conserves the redox energy in a proton gradient. Cyanobacterial NDH-1 also plays a role in inorganic carbon-concentration. This is NAD(P)H-quinone oxidoreductase subunit 3 from Prochlorococcus marinus (strain MIT 9312).